Reading from the N-terminus, the 72-residue chain is SRY-related protein AES4 (72 aa).

The segment at residues valine 1–lysine 69 is a DNA-binding region (HMG box).

It localises to the nucleus. The polypeptide is SRY-related protein AES4 (Alligator mississippiensis (American alligator)).